A 431-amino-acid polypeptide reads, in one-letter code: Histidine--tRNA ligase (431 aa).

Belongs to the class-II aminoacyl-tRNA synthetase family. In terms of assembly, homodimer.

It is found in the cytoplasm. The catalysed reaction is tRNA(His) + L-histidine + ATP = L-histidyl-tRNA(His) + AMP + diphosphate + H(+). The polypeptide is Histidine--tRNA ligase (Neisseria meningitidis serogroup C (strain 053442)).